A 255-amino-acid polypeptide reads, in one-letter code: AA9 family lytic polysaccharide monooxygenase D (255 aa).

Positions 1-19 are cleaved as a signal peptide; that stretch reads MYRTLGSIALLAGGAAAHG. 2 residues coordinate Cu(2+): His-18 and His-92. 2 disulfides stabilise this stretch: Cys-65–Cys-189 and Cys-104–Cys-111. Residue Asn-152 is glycosylated (N-linked (GlcNAc...) asparagine). O2 contacts are provided by His-178 and Gln-184. Tyr-186 lines the Cu(2+) pocket. Asn-220 carries an N-linked (GlcNAc...) asparagine glycan.

Belongs to the polysaccharide monooxygenase AA9 family. The cofactor is Cu(2+).

Its subcellular location is the secreted. It catalyses the reaction [(1-&gt;4)-beta-D-glucosyl]n+m + reduced acceptor + O2 = 4-dehydro-beta-D-glucosyl-[(1-&gt;4)-beta-D-glucosyl]n-1 + [(1-&gt;4)-beta-D-glucosyl]m + acceptor + H2O.. Lytic polysaccharide monooxygenase (LPMO) that depolymerizes crystalline and amorphous polysaccharides via the oxidation of scissile alpha- or beta-(1-4)-glycosidic bonds, yielding specifically C1 oxidation product. Catalysis by LPMOs requires the reduction of the active-site copper from Cu(II) to Cu(I) by a reducing agent and H(2)O(2) or O(2) as a cosubstrate. Is active on regenerated amorphous cellulose (RAC) in the presence of ascorbic acid or 3-methylcatechol. Also acts on phosphoric acid swollen cellulose (PASC) as a substrate. The sequence is that of AA9 family lytic polysaccharide monooxygenase D from Thermothelomyces thermophilus (strain ATCC 42464 / BCRC 31852 / DSM 1799) (Sporotrichum thermophile).